The sequence spans 193 residues: Resuscitation-promoting factor Rpf1 (193 aa).

Residues 1–35 (MGRHSTKTSSAFTKLAASTIAFGAAATIMAPSASA) form the signal peptide.

Belongs to the transglycosylase family. Rpf subfamily.

The protein resides in the secreted. Its function is as follows. Factor that stimulates resuscitation of dormant cells. Has peptidoglycan (PG) hydrolytic activity. Active in the pM concentration range. Has little to no effect on actively-growing cells. PG fragments could either directly activate the resuscitation pathway of dormant bacteria or serve as a substrate for endogenous Rpf, resulting in low molecular weight products with resuscitation activity. The sequence is that of Resuscitation-promoting factor Rpf1 (rpf1) from Corynebacterium glutamicum (strain ATCC 13032 / DSM 20300 / JCM 1318 / BCRC 11384 / CCUG 27702 / LMG 3730 / NBRC 12168 / NCIMB 10025 / NRRL B-2784 / 534).